The chain runs to 481 residues: Proton-coupled amino acid transporter 2 (481 aa).

The Cytoplasmic segment spans residues 1–56 (MSVTKSAGSPQVAATVKLDLVSFPESAKKVQSQDPNPVNGSSSESSEKTKGITGFQ). The tract at residues 26–49 (SAKKVQSQDPNPVNGSSSESSEKT) is disordered. Residues 29 to 40 (KVQSQDPNPVNG) are compositionally biased toward polar residues. The chain crosses the membrane as a helical span at residues 57 to 77 (TLVHLVKGNMGTGILGLPLAV). The Extracellular segment spans residues 78–79 (KN). Residues 80-100 (AGILMGPLSLLVMGLIACHCM) traverse the membrane as a helical segment. At 101–146 (HILVRCAQRFCHRLNKPFMDYGDTVMHGLASSPNTWLQSHAHWGRH) the chain is on the cytoplasmic side. A helical transmembrane segment spans residues 147–167 (AVSFFLIVTQLGFCCVYIVFL). Topologically, residues 168-195 (ADNLKQVVEAVNSTTISCHKNETVVLTP) are extracellular. A helical membrane pass occupies residues 196–216 (TIDSRLYMLAFLPVLGLLVFI). Topologically, residues 217–220 (RNLR) are cytoplasmic. A helical membrane pass occupies residues 221 to 241 (VLTIFSLLANVSMLVSLVIIG). The Extracellular portion of the chain corresponds to 242 to 262 (QYIIQGIPDPSQLPLVASWKT). A helical transmembrane segment spans residues 263 to 283 (YPLFFGTAIFSFESIGVVLPL). Over 284–295 (ENKMKDARRFPT) the chain is Cytoplasmic. A helical transmembrane segment spans residues 296 to 316 (ILSLGMSIITTLYIAIGALGY). The Extracellular portion of the chain corresponds to 317 to 343 (LRFGDDIKASITLNLPNCWLYQSVKLL). Residues 344-364 (YVVGILCTHALQFYVPAEIII) form a helical membrane-spanning segment. Topologically, residues 365 to 377 (PLAVSQVSKRWAL) are cytoplasmic. A helical membrane pass occupies residues 378-398 (PVDLSIRLALVCVTCMLAILI). At 399 to 402 (PRLD) the chain is on the extracellular side. The helical transmembrane segment at 403–423 (LVLSLVGSVSSSALALIIPPL) threads the bilayer. At 424-444 (LEVTTYYGEGMSPLTITKDAL) the chain is on the cytoplasmic side. Residues 445 to 465 (ISILGFMGFVVGTYQALDELI) traverse the membrane as a helical segment. Topologically, residues 466 to 481 (RSGNSLPLSNSTMFIQ) are extracellular.

Belongs to the amino acid/polyamine transporter 2 family. In terms of tissue distribution, expressed in lung and spleen, and to a lower extent in brain, heart, kidney and skeletal muscle.

It is found in the cell membrane. The protein resides in the endoplasmic reticulum membrane. It localises to the recycling endosome membrane. It catalyses the reaction glycine(in) + H(+)(in) = glycine(out) + H(+)(out). The catalysed reaction is L-alanine(in) + H(+)(in) = L-alanine(out) + H(+)(out). It carries out the reaction D-alanine(in) + H(+)(in) = D-alanine(out) + H(+)(out). The enzyme catalyses L-proline(out) + H(+)(out) = L-proline(in) + H(+)(in). It catalyses the reaction D-proline(out) + H(+)(out) = D-proline(in) + H(+)(in). The catalysed reaction is 4-hydroxy-L-proline(in) + H(+)(in) = 4-hydroxy-L-proline(out) + H(+)(out). It carries out the reaction L-serine(in) + H(+)(in) = L-serine(out) + H(+)(out). The enzyme catalyses D-serine(out) + H(+)(out) = D-serine(in) + H(+)(in). It catalyses the reaction beta-alanine(in) + H(+)(in) = beta-alanine(out) + H(+)(out). The catalysed reaction is 4-aminobutanoate(in) + H(+)(in) = 4-aminobutanoate(out) + H(+)(out). It carries out the reaction sarcosine(in) + H(+)(in) = sarcosine(out) + H(+)(out). The enzyme catalyses N,N-dimethylglycine(in) + H(+)(in) = N,N-dimethylglycine(out) + H(+)(out). Its activity is regulated as follows. Inhibited by L- and D-pipecolic acid, nipecotic acid, isonipecotic acid, L- and D-cycloserine, and L-2-azetidine-carboxylate. Functionally, electrogenic proton/amino acid symporter with a high selectivity for the small side chains amino acids glycine, alanine and proline, where both L- and D-enantiomers are transported. Extension of the backbone length, as in beta-alanine and 4-aminobutanoate or methylation of the amino group, as in sarcosine and N,N-dimethylglycine, are also tolerated but decrease transport efficiency. A free carboxyl group is preferred. This chain is Proton-coupled amino acid transporter 2, found in Rattus norvegicus (Rat).